The chain runs to 166 residues: Large ribosomal subunit protein uL11 (166 aa).

Belongs to the universal ribosomal protein uL11 family.

The sequence is that of Large ribosomal subunit protein uL11 (rpl12) from Dictyostelium discoideum (Social amoeba).